Reading from the N-terminus, the 201-residue chain is Recombination protein RecR (201 aa).

Residues Cys60–Cys75 form a C4-type zinc finger. Positions Ser83–Pro178 constitute a Toprim domain.

The protein belongs to the RecR family.

May play a role in DNA repair. It seems to be involved in an RecBC-independent recombinational process of DNA repair. It may act with RecF and RecO. This Rhizobium leguminosarum bv. trifolii (strain WSM2304) protein is Recombination protein RecR.